The primary structure comprises 378 residues: Protein SLG1 (378 aa).

The signal sequence occupies residues 1 to 21; the sequence is MRPNKTSLLLALLSILSQANA. The 89-residue stretch at 22 to 110 folds into the WSC domain; the sequence is YEYVNCFSSL…EDAYSVYQLD (89 aa). The Extracellular segment spans residues 22-264; that stretch reads YEYVNCFSSL…THKKKANVGA (243 aa). N-linked (GlcNAc...) asparagine glycosylation is present at asparagine 65. 2 disordered regions span residues 115–201 and 236–256; these read SNSI…TSST and QNSG…SKTH. Low complexity predominate over residues 236-253; that stretch reads QNSGSATGTAGSDSTSGS. The helical transmembrane segment at 265–285 threads the bilayer; sequence IVGGVVGGVVGAVAIALCILL. Over 286–378 the chain is Cytoplasmic; sequence IVRHINMKRE…LTVVNPDEAD (93 aa). The disordered stretch occupies residues 318–378; it reads ASSFSSNHGP…LTVVNPDEAD (61 aa). The span at 319–331 shows a compositional bias: low complexity; that stretch reads SSFSSNHGPSSGS. Residues serine 331 and serine 353 each carry the phosphoserine modification.

Glycosylated. Phosphorylated. Phosphorylation serves a negative regulatory role.

It is found in the cell membrane. Plays a role during G1 to regulate entering or exiting the cell cycle. Involved in stress responses. Has a role in cell wall integrity signaling. Activates ROM1 or ROM2 catalyzed guanine nucleotide exchange toward RHO1. Important regulator of the actin cytoskeleton rearrangements in conditions of cell wall expansion and membrane stretching. Specifically required for the actin reorganization induced by hypo-osmotic shock. Multicopy suppressor of 1,3-beta-glucan synthase (GS). Activates GS upstream of RHO1. Acts positively on the PKC1-MAPK pathway. Activates transiently SLT2 during alkaline stress, which leads to an increase in the expression of several specific genes. This is Protein SLG1 (SLG1) from Saccharomyces cerevisiae (strain ATCC 204508 / S288c) (Baker's yeast).